The following is a 195-amino-acid chain: Imidazoleglycerol-phosphate dehydratase (195 aa).

This sequence belongs to the imidazoleglycerol-phosphate dehydratase family.

Its subcellular location is the cytoplasm. The enzyme catalyses D-erythro-1-(imidazol-4-yl)glycerol 3-phosphate = 3-(imidazol-4-yl)-2-oxopropyl phosphate + H2O. Its pathway is amino-acid biosynthesis; L-histidine biosynthesis; L-histidine from 5-phospho-alpha-D-ribose 1-diphosphate: step 6/9. In Geobacillus thermodenitrificans (strain NG80-2), this protein is Imidazoleglycerol-phosphate dehydratase.